A 1416-amino-acid chain; its full sequence is 1-phosphatidylinositol 4,5-bisphosphate phosphodiesterase eta-2 (1416 aa).

A necessary for plasma membrane localization region spans residues 1–155 (MSGPWPSPDS…WVTGLRYLMA (155 aa)). The 109-residue stretch at 47–155 (GAMQEGMQMV…WVTGLRYLMA (109 aa)) folds into the PH domain. EF-hand domains are found at residues 169–204 (TRDQ…LNVN) and 205–241 (LPRQ…MSTR). The Ca(2+) site is built by D182, N184, D186, S188, and E193. Positions 326–471 (QDMTQPLSHY…LKGKILVKGK (146 aa)) constitute a PI-PLC X-box domain. H341 is a catalytic residue. Ca(2+) is bound by residues N342, E371, and D373. The active site involves H385. Ca(2+) is bound at residue E420. 2 residues coordinate substrate: K469 and K471. S487 and S491 each carry phosphoserine. The disordered stretch occupies residues 535–620 (DPNNFSVSTL…RGATRQKKTM (86 aa)). Residues 537 to 546 (NNFSVSTLSP) show a composition bias toward polar residues. The span at 581-592 (SRRKKKGSKLKK) shows a compositional bias: basic residues. Residues S595 and S605 each carry the phosphoserine modification. A PI-PLC Y-box domain is found at 626-740 (LSDLVKYTKS…GYVLKPGCMC (115 aa)). Substrate-binding residues include S653 and R680. The C2 domain occupies 740 to 869 (CQGVFNPNSE…PGYRHVYLEG (130 aa)). Positions 784, 786, 810, 839, 840, and 841 each coordinate Ca(2+). 3 disordered regions span residues 905 to 1109 (GSLD…GGWR), 1121 to 1222 (YSDA…LQPR), and 1315 to 1405 (ITSP…GPAS). The segment covering 1011-1021 (APGPGPPPPAA) has biased composition (pro residues). The segment covering 1073–1083 (GSQTDGRSQPR) has biased composition (polar residues). Residues 1143 to 1166 (VSSSSSMSSSDTVIDLSLPSLGLG) show a composition bias toward low complexity. Positions 1199 to 1208 (KSKSNPNLRA) are enriched in polar residues. Residues 1324–1333 (AGEGVAGGPG) are compositionally biased toward gly residues.

Ca(2+) serves as cofactor. Expressed in retina and kidney.

Its subcellular location is the cytoplasm. The protein localises to the cell membrane. The enzyme catalyses a 1,2-diacyl-sn-glycero-3-phospho-(1D-myo-inositol-4,5-bisphosphate) + H2O = 1D-myo-inositol 1,4,5-trisphosphate + a 1,2-diacyl-sn-glycerol + H(+). With respect to regulation, activity is stimulated by GNB1:GNG2. Its function is as follows. The production of the second messenger molecules diacylglycerol (DAG) and inositol 1,4,5-trisphosphate (IP3) is mediated by activated phosphatidylinositol-specific phospholipase C enzymes. This phospholipase activity is very sensitive to calcium. May be important for formation and maintenance of the neuronal network in the postnatal brain. The polypeptide is 1-phosphatidylinositol 4,5-bisphosphate phosphodiesterase eta-2 (Homo sapiens (Human)).